The following is a 404-amino-acid chain: uncharacterized protein (404 aa).

The next 11 membrane-spanning stretches (helical) occupy residues 9 to 29 (IYLIGELSAKCVPFLLLPYLS), 36 to 56 (GFGELSYYQTFLPLFVIFIGL), 76 to 96 (LVVKTGYAYTLSIGGLGLLFC), 103 to 123 (IMFYLVLSAIFQVFLSVQLSI), 135 to 155 (FIQVSSTITNAALTILMLEFY), 162 to 182 (KRILAILISNVFVALLSYLIY), 199 to 219 (AFFYIMSFGFLMIFHHGSFFI), 236 to 256 (LGLYAMGAQIAFILSVFILAI), 288 to 308 (IVPIPSLVTLIVPEQWLLFFL), 319 to 339 (IIVFLLSTSLTIPYLFLVNYL), and 366 to 386 (LIFTDVVYIPYASVLGALGIL).

The protein belongs to the polysaccharide synthase family. HI_0867/HI_1700 subfamily.

It is found in the cell membrane. This is an uncharacterized protein from Haemophilus influenzae (strain ATCC 51907 / DSM 11121 / KW20 / Rd).